Consider the following 273-residue polypeptide: Large ribosomal subunit protein uL2 (273 aa).

The interval 221–273 is disordered; sequence RGTAMNPVDHPHGGGEGRNFGKHPVTPWGIQTKGKKTRSNKRTDKFIVRRRSK.

This sequence belongs to the universal ribosomal protein uL2 family. As to quaternary structure, part of the 50S ribosomal subunit. Forms a bridge to the 30S subunit in the 70S ribosome.

Functionally, one of the primary rRNA binding proteins. Required for association of the 30S and 50S subunits to form the 70S ribosome, for tRNA binding and peptide bond formation. It has been suggested to have peptidyltransferase activity; this is somewhat controversial. Makes several contacts with the 16S rRNA in the 70S ribosome. This is Large ribosomal subunit protein uL2 from Sodalis glossinidius (strain morsitans).